A 373-amino-acid chain; its full sequence is Zinc finger protein CONSTANS-LIKE 10 (373 aa).

8 residues coordinate Zn(2+): Cys5, Cys8, Cys28, His33, Cys48, Cys51, Cys71, and His76. The B box-type 1; atypical zinc finger occupies 5–47 (CDFCGEQRSMVYCRSDAACLCLSCDRNVHSANALSKRHSRTLV). A B box-type 2; atypical zinc finger spans residues 48–92 (CERCNAQPASVRCSDERVSLCQNCDWSGHDGKNSTTTSHHKRQTI). The disordered stretch occupies residues 152-172 (PETSSAAQGMDHSSVPENSSM). In terms of domain architecture, CCT spans 316 to 358 (RNNAVMRYKEKKKARKFDKRVRYVSRKERADVRRRVKGRFVKS).

Belongs to the CONSTANS family.

Its subcellular location is the nucleus. The chain is Zinc finger protein CONSTANS-LIKE 10 (COL10) from Arabidopsis thaliana (Mouse-ear cress).